The primary structure comprises 473 residues: 1-deoxy-D-xylulose 5-phosphate reductoisomerase, chloroplastic (473 aa).

The transit peptide at 1–49 (MALKVVSFPGDLAAVSFLDSNRGGAFNQLKVDLPFQTRDRRAVSLRRTC) directs the protein to the chloroplast. NADPH is bound by residues threonine 85, glycine 86, serine 87, isoleucine 88, glycine 111, asparagine 113, and asparagine 199. Lysine 200 provides a ligand contact to 1-deoxy-D-xylulose 5-phosphate. Glutamate 201 provides a ligand contact to NADPH. Aspartate 225 is a Mn(2+) binding site. Positions 226, 227, 251, and 274 each coordinate 1-deoxy-D-xylulose 5-phosphate. Position 227 (glutamate 227) interacts with Mn(2+). Glycine 280 lines the NADPH pocket. The 1-deoxy-D-xylulose 5-phosphate site is built by serine 287, asparagine 292, lysine 293, and glutamate 296. Glutamate 296 contributes to the Mn(2+) binding site.

It belongs to the DXR family. It depends on Mn(2+) as a cofactor. The cofactor is Mg(2+).

It is found in the plastid. Its subcellular location is the chloroplast stroma. It catalyses the reaction 2-C-methyl-D-erythritol 4-phosphate + NADP(+) = 1-deoxy-D-xylulose 5-phosphate + NADPH + H(+). The protein operates within isoprenoid biosynthesis; isopentenyl diphosphate biosynthesis via DXP pathway; isopentenyl diphosphate from 1-deoxy-D-xylulose 5-phosphate: step 1/6. Its function is as follows. Enzyme of the plastid non-mevalonate pathway for isoprenoid biosynthesis that catalyzes the NADPH-dependent rearrangement and reduction of 1-deoxy-D-xylulose-5-phosphate (DXP) to 2-C-methyl-D-erythritol 4-phosphate (MEP). Required for chloroplast development. This Oryza sativa subsp. japonica (Rice) protein is 1-deoxy-D-xylulose 5-phosphate reductoisomerase, chloroplastic (DXR).